The sequence spans 77 residues: Acyl carrier protein (77 aa).

Positions methionine 1–glutamate 76 constitute a Carrier domain. At serine 36 the chain carries O-(pantetheine 4'-phosphoryl)serine.

This sequence belongs to the acyl carrier protein (ACP) family. 4'-phosphopantetheine is transferred from CoA to a specific serine of apo-ACP by AcpS. This modification is essential for activity because fatty acids are bound in thioester linkage to the sulfhydryl of the prosthetic group.

It localises to the cytoplasm. The protein operates within lipid metabolism; fatty acid biosynthesis. Carrier of the growing fatty acid chain in fatty acid biosynthesis. The protein is Acyl carrier protein of Staphylococcus aureus (strain Mu3 / ATCC 700698).